Here is a 252-residue protein sequence, read N- to C-terminus: 3-dehydroquinate dehydratase (252 aa).

3-dehydroquinate contacts are provided by residues S21, 46 to 48 (EWR), and R82. H143 functions as the Proton donor/acceptor in the catalytic mechanism. Catalysis depends on K170, which acts as the Schiff-base intermediate with substrate. 3-dehydroquinate-binding residues include R213, S232, and Q236.

Belongs to the type-I 3-dehydroquinase family. Homodimer.

The enzyme catalyses 3-dehydroquinate = 3-dehydroshikimate + H2O. The protein operates within metabolic intermediate biosynthesis; chorismate biosynthesis; chorismate from D-erythrose 4-phosphate and phosphoenolpyruvate: step 3/7. Involved in the third step of the chorismate pathway, which leads to the biosynthesis of aromatic amino acids. Catalyzes the cis-dehydration of 3-dehydroquinate (DHQ) and introduces the first double bond of the aromatic ring to yield 3-dehydroshikimate. The polypeptide is 3-dehydroquinate dehydratase (Escherichia coli O7:K1 (strain IAI39 / ExPEC)).